The chain runs to 527 residues: Glucose-6-phosphate isomerase (527 aa).

Glu-323 functions as the Proton donor in the catalytic mechanism. Residues His-352 and Lys-454 contribute to the active site.

Belongs to the GPI family.

It localises to the cytoplasm. The enzyme catalyses alpha-D-glucose 6-phosphate = beta-D-fructose 6-phosphate. The protein operates within carbohydrate biosynthesis; gluconeogenesis. It participates in carbohydrate degradation; glycolysis; D-glyceraldehyde 3-phosphate and glycerone phosphate from D-glucose: step 2/4. In terms of biological role, catalyzes the reversible isomerization of glucose-6-phosphate to fructose-6-phosphate. The chain is Glucose-6-phosphate isomerase from Prochlorococcus marinus (strain MIT 9515).